A 657-amino-acid chain; its full sequence is THO complex subunit 1 (657 aa).

An N-acetylmethionine modification is found at Met-1. Ser-2 is modified (phosphoserine). Thr-4 bears the Phosphothreonine mark. A Glycyl lysine isopeptide (Lys-Gly) (interchain with G-Cter in SUMO2) cross-link involves residue Lys-31. Lys-133 carries the N6-acetyllysine modification. Residues 133 to 167 are dock domain; interaction with THOC2; the sequence is KNYLLRMCNDLLRRLSKSQNTVFCGRIQLFLARLF. The segment at 194–222 is disordered; sequence QESTLGQKHTEDREEGMDVEEGEMGDEEA. Acidic residues predominate over residues 206 to 222; it reads REEGMDVEEGEMGDEEA. The interval 227–397 is dock domain; interaction with THOC2; the sequence is SIPIDYNLYR…WNSWKNEGCP (171 aa). Lys-300 bears the N6-acetyllysine mark. A Glycyl lysine isopeptide (Lys-Gly) (interchain with G-Cter in SUMO2) cross-link involves residue Lys-408. Residues 414–430 carry the Nuclear localization signal motif; that stretch reads RKRTAPEDFLGKGPTKK. The segment at 533-569 is disordered; sequence LPPPSEEIKTGEDEDEEDNDALLKENESPDVRRDKPV. Ser-537 carries the phosphoserine modification. Residue Thr-542 is modified to Phosphothreonine. Positions 553–569 are enriched in basic and acidic residues; that stretch reads ALLKENESPDVRRDKPV. Ser-560 is subject to Phosphoserine. The Death domain maps to 570-653; the sequence is TGEQIEVFAN…DLAESLTNDN (84 aa). Residue Lys-580 forms a Glycyl lysine isopeptide (Lys-Gly) (interchain with G-Cter in SUMO2) linkage. Lys-595 participates in a covalent cross-link: Glycyl lysine isopeptide (Lys-Gly) (interchain with G-Cter in SUMO1); alternate. A Glycyl lysine isopeptide (Lys-Gly) (interchain with G-Cter in SUMO2); alternate cross-link involves residue Lys-595.

The protein belongs to the THOC1 family. In terms of assembly, component of the THO subcomplex, which is composed of THOC1, THOC2, THOC3, THOC5, THOC6 and THOC7. The THO subcomplex interacts with DDX39B to form the THO-DDX39B complex which multimerizes into a 28-subunit tetrameric assembly. Component of the transcription/export (TREX) complex at least composed of ALYREF/THOC4, DDX39B, SARNP/CIP29, CHTOP and the THO subcomplex; in the complex interacts with THOC2, THOC5 and THOC7. TREX seems to have a dynamic structure involving ATP-dependent remodeling. Binds to the hypophosphorylated form of RB1. Interacts with RNA polymerase II. Interacts with LUZP4. Post-translationally, expression is altered specifically during apoptosis and is accompanied by the appearance of novel forms with smaller apparent molecular mass. In terms of processing, polyubiquitinated, leading to proteasomal degradation; probably involves NEDD4. As to expression, ubiquitous. Expressed in various cancer cell lines. Expressed at very low levels in normal breast epithelial cells and highly expressed in breast tumors. Expression is strongly associated with an aggressive phenotype of breast tumors and expression correlates with tumor size and the metastatic state of the tumor progression.

The protein localises to the nucleus speckle. It localises to the nucleus. Its subcellular location is the nucleoplasm. The protein resides in the nucleus matrix. It is found in the cytoplasm. Its function is as follows. Component of the THO subcomplex of the TREX complex which is thought to couple mRNA transcription, processing and nuclear export, and which specifically associates with spliced mRNA and not with unspliced pre-mRNA. Required for efficient export of polyadenylated RNA. The THOC1-THOC2-THOC3 core complex alone is sufficient to bind export factor NXF1-NXT1 and promote ATPase activity of DDX39B/UAP56. TREX is recruited to spliced mRNAs by a transcription-independent mechanism, binds to mRNA upstream of the exon-junction complex (EJC) and is recruited in a splicing- and cap-dependent manner to a region near the 5' end of the mRNA where it functions in mRNA export to the cytoplasm via the TAP/NXF1 pathway. Regulates transcriptional elongation of a subset of genes. Involved in genome stability by preventing co-transcriptional R-loop formation. May play a role in hair cell formation, hence may be involved in hearing. Functionally, participates in an apoptotic pathway which is characterized by activation of caspase-6, increases in the expression of BAK1 and BCL2L1 and activation of NF-kappa-B. This pathway does not require p53/TP53, nor does the presence of p53/TP53 affect the efficiency of cell killing. Activates a G2/M cell cycle checkpoint prior to the onset of apoptosis. Apoptosis is inhibited by association with RB1. (Microbial infection) The TREX complex is essential for the export of Kaposi's sarcoma-associated herpesvirus (KSHV) intronless mRNAs and infectious virus production. This Homo sapiens (Human) protein is THO complex subunit 1 (THOC1).